The primary structure comprises 611 residues: Rop guanine nucleotide exchange factor 5 (611 aa).

Residues 1 to 62 (MENLVKSCAG…PPPPPSQILG (62 aa)) form a disordered region. The segment covering 34–51 (STSGASYESSSTTTVASS) has biased composition (low complexity). A PRONE domain is found at 93–477 (FKAKEMNSAD…DLTKQSDDNN (385 aa)). Disordered regions lie at residues 513 to 541 (TTPGFSPSMISPKKGERRTPYSSKDTNKI) and 588 to 611 (DVEEEKKRNSTSVHQKGPPKYTVS). Residues 525–541 (KKGERRTPYSSKDTNKI) are compositionally biased toward basic and acidic residues.

In terms of biological role, guanine-nucleotide exchange factor (GEF) that acts as an activator of Rop (Rho of plants) GTPases by promoting the exchange of GDP for GTP. The sequence is that of Rop guanine nucleotide exchange factor 5 (ROPGEF5) from Arabidopsis thaliana (Mouse-ear cress).